The primary structure comprises 444 residues: ATP-dependent protease ATPase subunit HslU (444 aa).

ATP is bound by residues isoleucine 18, 60–65, aspartate 256, glutamate 321, and arginine 393; that span reads GVGKTE.

It belongs to the ClpX chaperone family. HslU subfamily. As to quaternary structure, a double ring-shaped homohexamer of HslV is capped on each side by a ring-shaped HslU homohexamer. The assembly of the HslU/HslV complex is dependent on binding of ATP.

The protein resides in the cytoplasm. Functionally, ATPase subunit of a proteasome-like degradation complex; this subunit has chaperone activity. The binding of ATP and its subsequent hydrolysis by HslU are essential for unfolding of protein substrates subsequently hydrolyzed by HslV. HslU recognizes the N-terminal part of its protein substrates and unfolds these before they are guided to HslV for hydrolysis. The sequence is that of ATP-dependent protease ATPase subunit HslU from Buchnera aphidicola subsp. Baizongia pistaciae (strain Bp).